The sequence spans 319 residues: Annexin A4 (319 aa).

Ala-2 is subject to N-acetylalanine. Thr-7 is subject to Phosphothreonine. Ser-12 carries the post-translational modification Phosphoserine. Annexin repeat units lie at residues 14 to 85, 86 to 157, 169 to 241, and 245 to 316; these read FNAA…GMMT, PTVL…SLSA, ALMR…AIVK, and NKSA…ILCG. An N6-acetyllysine mark is found at Lys-213, Lys-293, and Lys-300.

This sequence belongs to the annexin family. Monomer. Binds to SFTPA1 in a Ca(2+)-dependent manner.

It is found in the zymogen granule membrane. Functionally, may play a role in alveolar type II cells through interaction with the surfactant protein SFTPA1 (SP-A). This Bos taurus (Bovine) protein is Annexin A4 (ANXA4).